Consider the following 396-residue polypeptide: Acetate kinase (396 aa).

Asn-6 serves as a coordination point for Mg(2+). Lys-13 is a binding site for ATP. Residue Arg-89 coordinates substrate. Asp-145 functions as the Proton donor/acceptor in the catalytic mechanism. ATP is bound by residues 205 to 209 (HLGNG), 280 to 282 (DMR), and 329 to 333 (GVGEN). Glu-383 is a binding site for Mg(2+).

It belongs to the acetokinase family. Homodimer. Mg(2+) serves as cofactor. Requires Mn(2+) as cofactor.

The protein resides in the cytoplasm. The catalysed reaction is acetate + ATP = acetyl phosphate + ADP. Its pathway is metabolic intermediate biosynthesis; acetyl-CoA biosynthesis; acetyl-CoA from acetate: step 1/2. Functionally, catalyzes the formation of acetyl phosphate from acetate and ATP. Can also catalyze the reverse reaction. The sequence is that of Acetate kinase from Mesoplasma florum (strain ATCC 33453 / NBRC 100688 / NCTC 11704 / L1) (Acholeplasma florum).